We begin with the raw amino-acid sequence, 664 residues long: Acid beta-fructofuranosidase 4, vacuolar (664 aa).

At M1–K43 the chain is on the cytoplasmic side. Residues M1–P108 constitute a propeptide, removed in mature form. 2 short sequence motifs (critical for endoplasmic reticulum export) span residues L7–L8 and P9–I10. A Critical for trafficking from the trans-Golgi network to the prevacuolar compartment and from the prevacuolar compartment to the central vacuole motif is present at residues E14 to E16. Residues G44–T64 form a helical; Signal-anchor for type II membrane protein membrane-spanning segment. The Lumenal segment spans residues H65–T664. A glycan (N-linked (GlcNAc...) asparagine) is linked at N113. Substrate-binding positions include W132–D135, Q151, W159, W194–T195, and R258–D259. Residue D135 is part of the active site. N-linked (GlcNAc...) (complex) asparagine glycosylation is present at N280. Substrate-binding residues include E313 and D346. Residues N362 and N498 are each glycosylated (N-linked (GlcNAc...) asparagine). Cysteines 510 and 558 form a disulfide.

Belongs to the glycosyl hydrolase 32 family. As to quaternary structure, may be present in two forms, a 70 kDa monomer and a heterodimer of the 30 kDa and 38 kDa subunits. The ratio of the levels of the two forms within cells appears to be regulated developmentally. Mostly expressed in stems, roots and flowers, and, to a lower extent, in mature leaves.

It is found in the vacuole. Its subcellular location is the endoplasmic reticulum membrane. The protein localises to the golgi apparatus membrane. It localises to the golgi apparatus. The protein resides in the trans-Golgi network membrane. It is found in the prevacuolar compartment membrane. Its subcellular location is the vacuole membrane. The protein localises to the vacuole lumen. It carries out the reaction Hydrolysis of terminal non-reducing beta-D-fructofuranoside residues in beta-D-fructofuranosides.. Its pathway is glycan biosynthesis; sucrose metabolism. Its activity is regulated as follows. Inhibited by C/VIF1 and C/VIF2. Its function is as follows. Possible role in the continued mobilization of sucrose to sink organs. Regulates root elongation. The sequence is that of Acid beta-fructofuranosidase 4, vacuolar from Arabidopsis thaliana (Mouse-ear cress).